A 123-amino-acid chain; its full sequence is Small ribosomal subunit protein uS13 (123 aa).

The segment at 96–123 (LPVRGQRTKTNARTRKGPKKTVGARRKK) is disordered.

Belongs to the universal ribosomal protein uS13 family. Part of the 30S ribosomal subunit. Forms a loose heterodimer with protein S19. Forms two bridges to the 50S subunit in the 70S ribosome.

In terms of biological role, located at the top of the head of the 30S subunit, it contacts several helices of the 16S rRNA. In the 70S ribosome it contacts the 23S rRNA (bridge B1a) and protein L5 of the 50S subunit (bridge B1b), connecting the 2 subunits; these bridges are implicated in subunit movement. Contacts the tRNAs in the A and P-sites. The chain is Small ribosomal subunit protein uS13 from Desulforamulus reducens (strain ATCC BAA-1160 / DSM 100696 / MI-1) (Desulfotomaculum reducens).